The primary structure comprises 468 residues: ATP synthase subunit beta (468 aa).

155–162 provides a ligand contact to ATP; the sequence is GGAGVGKT.

It belongs to the ATPase alpha/beta chains family. As to quaternary structure, F-type ATPases have 2 components, CF(1) - the catalytic core - and CF(0) - the membrane proton channel. CF(1) has five subunits: alpha(3), beta(3), gamma(1), delta(1), epsilon(1). CF(0) has three main subunits: a(1), b(2) and c(9-12). The alpha and beta chains form an alternating ring which encloses part of the gamma chain. CF(1) is attached to CF(0) by a central stalk formed by the gamma and epsilon chains, while a peripheral stalk is formed by the delta and b chains.

It is found in the cell membrane. The catalysed reaction is ATP + H2O + 4 H(+)(in) = ADP + phosphate + 5 H(+)(out). Functionally, produces ATP from ADP in the presence of a proton gradient across the membrane. The catalytic sites are hosted primarily by the beta subunits. This Streptococcus pyogenes serotype M5 (strain Manfredo) protein is ATP synthase subunit beta.